The chain runs to 481 residues: Guanine nucleotide exchange factor C9orf72 (481 aa).

Residues 23 to 194 enclose the uDENN C9ORF72-type domain; it reads SPLLAATFAY…ELLSSMKSHS (172 aa). A cDENN C9ORF72-type domain is found at 200-343; it reads DIADTVLNDD…SELTAFWRAT (144 aa). In terms of domain architecture, dDENN C9ORF72-type spans 370-464; sequence VLHRDTLVKA…IKPGLHSFIF (95 aa). The segment at 461 to 481 is required for the homodimerization of the C9orf72-SMCR8 complex; it reads SFIFGRPFYTSVQERDVLMTF.

Component of the C9orf72-SMCR8 complex, at least composed of C9orf72, SMCR8 and WDR41. The complex is formed of two protomers, each individually consisting of one molecule each of C9orf72, SMCR8 and WDR41. The protomers homodimerize via an interaction between C9orf72 (via C-terminus) and SMCR8 (via N-terminus). Within each protomer SMCR8 (via DENN domain) acts as a bridging protein between WDR41 (via C-terminus and N-terminus) and C9orf72 (via C-terminus). The C9orf72-SMCR8 complex associates with the ULK1/ATG1 kinase complex. Interacts with ULK1/ATG1 kinase complex members ULK1, ATG13 and RB1CC1. Interacts with SMCR8; the interaction is direct. Interacts with HNRNPA1, HNRNPA2B1 and UBQLN2. Interacts with small Rab GTPase RAB1A; the interaction mediates recruitment of RAB1A to the ULK1/ATG1 kinase complex. Also interacts with small Rab GTPase RAB7A. Interacts with cofilin. Interacts with GTP-binding proteins ARF1 and ARF6. Interacts with the DLG4/PSD-95. Interacts with CARM1 (via PH domain-like fold). Interacts with RAB39A and RAB39B (in GDP-bound forms); functions as GEF for RAB39A and RAB39B. As to expression, both isoforms are widely expressed, including kidney, lung, liver, heart, testis and several brain regions, such as cerebellum. Also expressed in the frontal cortex and in lymphoblasts (at protein level).

It localises to the cytoplasm. The protein localises to the nucleus. It is found in the P-body. The protein resides in the stress granule. Its subcellular location is the endosome. It localises to the lysosome. The protein localises to the cytoplasmic vesicle. It is found in the autophagosome. The protein resides in the autolysosome. Its subcellular location is the secreted. It localises to the cell projection. The protein localises to the axon. It is found in the growth cone. The protein resides in the perikaryon. Its subcellular location is the dendrite. It localises to the presynapse. The protein localises to the postsynapse. It is found in the nucleus membrane. Its function is as follows. Acts as a guanine-nucleotide releasing factor (GEF) for Rab GTPases by promoting the conversion of inactive RAB-GDP to the active form RAB-GTP. Acts as a GEF for RAB39A which enables HOPS-mediated autophagosome-lysosome membrane tethering and fusion in mammalian autophagy. Component of the C9orf72-SMCR8 complex where both subunits display GEF activity and that regulates autophagy. As part of the C9orf72-SMCR8-WDR41 (CSW) complex, functions as GEF for RAB8A and RAB39B, thereby promoting autophagosome maturation. As part of the C9orf72-SMCR8 complex, also functions as GTPase activating protein (GAP) for RAB8A and RAB11A in vitro. The C9orf72-SMCR8 complex also acts as a regulator of autophagy initiation by interacting with the ULK1/ATG1 kinase complex and modulating its protein kinase activity. Promotes initiation of autophagy by regulating the RAB1A-dependent trafficking of the ULK1/ATG1 kinase complex to the phagophore which leads to autophagosome formation. Acts as a regulator of mTORC1 signaling by promoting phosphorylation of mTORC1 substrates. Plays a role in endosomal trafficking. May be involved in regulating the maturation of phagosomes to lysosomes. Promotes the lysosomal localization and lysosome-mediated degradation of CARM1 which leads to inhibition of starvation-induced lipid metabolism. Regulates actin dynamics in motor neurons by inhibiting the GTP-binding activity of ARF6, leading to ARF6 inactivation. This reduces the activity of the LIMK1 and LIMK2 kinases which are responsible for phosphorylation and inactivation of cofilin, leading to CFL1/cofilin activation. Positively regulates axon extension and axon growth cone size in spinal motor neurons. Required for SMCR8 protein expression and localization at pre- and post-synaptic compartments in the forebrain, also regulates protein abundance of RAB3A and GRIA1/GLUR1 in post-synaptic compartments in the forebrain and hippocampus. Plays a role within the hematopoietic system in restricting inflammation and the development of autoimmunity. In terms of biological role, regulates stress granule assembly in response to cellular stress. Functionally, does not play a role in regulation of stress granule assembly in response to cellular stress. The sequence is that of Guanine nucleotide exchange factor C9orf72 from Homo sapiens (Human).